Here is a 162-residue protein sequence, read N- to C-terminus: Transcription elongation factor GreA (162 aa).

Residues 1-28 (MQKEPMLEETYRKLSEELEQLKSVERGV) are a coiled coil.

It belongs to the GreA/GreB family.

Functionally, necessary for efficient RNA polymerase transcription elongation past template-encoded arresting sites. The arresting sites in DNA have the property of trapping a certain fraction of elongating RNA polymerases that pass through, resulting in locked ternary complexes. Cleavage of the nascent transcript by cleavage factors such as GreA or GreB allows the resumption of elongation from the new 3'terminus. GreA releases sequences of 2 to 3 nucleotides. The sequence is that of Transcription elongation factor GreA from Sulfurovum sp. (strain NBC37-1).